Reading from the N-terminus, the 390-residue chain is UPF0229 protein ABC1477 (390 aa).

Disordered regions lie at residues 1–31 and 81–118; these read MEKD…RHQE and VGQG…QAGE. A compositionally biased stretch (polar residues) spans 7-16; it reads RQFTISQENW. Composition is skewed to basic and acidic residues over residues 22–31 and 86–100; these read GFQDQRRHQE and GDSK…DPNG.

This sequence belongs to the UPF0229 family.

This is UPF0229 protein ABC1477 from Shouchella clausii (strain KSM-K16) (Alkalihalobacillus clausii).